Here is a 236-residue protein sequence, read N- to C-terminus: MTRRYWNINLEEMMEAGVHFGHGTRKWNPRMAPYISAKRKGIHITNLTRTARFLSEACDLVFDAASRGKQFLIVGTKNKAADSVARAAIKARCHYVNKKWLGGMSTNWSTTETRLHKFRDLRTEQKTGRLNRLPKRDAAMLKRQLSHLQTYLGGIKYMTGLPDIVIIVDQQEEYTALRECITLGIPTICLIDTNCDPDLADISIPANDDAIASIRLILNKLVFAICEGRSSYIRNP.

Belongs to the universal ribosomal protein uS2 family.

Its subcellular location is the plastid. It localises to the chloroplast. The polypeptide is Small ribosomal subunit protein uS2c (rps2) (Vitis vinifera (Grape)).